A 102-amino-acid polypeptide reads, in one-letter code: ATP-dependent Clp protease adapter protein ClpS (102 aa).

Belongs to the ClpS family. In terms of assembly, binds to the N-terminal domain of the chaperone ClpA.

In terms of biological role, involved in the modulation of the specificity of the ClpAP-mediated ATP-dependent protein degradation. This is ATP-dependent Clp protease adapter protein ClpS from Shewanella pealeana (strain ATCC 700345 / ANG-SQ1).